The following is a 276-amino-acid chain: Thiazole synthase (276 aa).

K117 serves as the catalytic Schiff-base intermediate with DXP. Residues G178, 204-205 (AG), and 226-227 (NT) contribute to the 1-deoxy-D-xylulose 5-phosphate site.

The protein belongs to the ThiG family. As to quaternary structure, homotetramer. Forms heterodimers with either ThiH or ThiS.

The protein localises to the plastid. The protein resides in the chloroplast. The catalysed reaction is [ThiS sulfur-carrier protein]-C-terminal-Gly-aminoethanethioate + 2-iminoacetate + 1-deoxy-D-xylulose 5-phosphate = [ThiS sulfur-carrier protein]-C-terminal Gly-Gly + 2-[(2R,5Z)-2-carboxy-4-methylthiazol-5(2H)-ylidene]ethyl phosphate + 2 H2O + H(+). It functions in the pathway cofactor biosynthesis; thiamine diphosphate biosynthesis. Catalyzes the rearrangement of 1-deoxy-D-xylulose 5-phosphate (DXP) to produce the thiazole phosphate moiety of thiamine. Sulfur is provided by the thiocarboxylate moiety of the carrier protein ThiS. In vitro, sulfur can be provided by H(2)S. The polypeptide is Thiazole synthase (Gracilaria tenuistipitata var. liui (Red alga)).